The sequence spans 485 residues: N-succinylglutamate 5-semialdehyde dehydrogenase (485 aa).

220–225 (GSANTG) contributes to the NAD(+) binding site. Active-site residues include Glu-243 and Cys-278.

This sequence belongs to the aldehyde dehydrogenase family. AstD subfamily.

It carries out the reaction N-succinyl-L-glutamate 5-semialdehyde + NAD(+) + H2O = N-succinyl-L-glutamate + NADH + 2 H(+). It functions in the pathway amino-acid degradation; L-arginine degradation via AST pathway; L-glutamate and succinate from L-arginine: step 4/5. In terms of biological role, catalyzes the NAD-dependent reduction of succinylglutamate semialdehyde into succinylglutamate. This is N-succinylglutamate 5-semialdehyde dehydrogenase from Vibrio vulnificus (strain YJ016).